Here is a 370-residue protein sequence, read N- to C-terminus: DNA replication and repair protein RecF (370 aa).

30–37 (GDNGSGKT) contacts ATP.

The protein belongs to the RecF family.

It localises to the cytoplasm. Its function is as follows. The RecF protein is involved in DNA metabolism; it is required for DNA replication and normal SOS inducibility. RecF binds preferentially to single-stranded, linear DNA. It also seems to bind ATP. The polypeptide is DNA replication and repair protein RecF (Stutzerimonas stutzeri (strain A1501) (Pseudomonas stutzeri)).